A 249-amino-acid chain; its full sequence is Mannose-binding protein C (249 aa).

The N-terminal stretch at 1 to 20 is a signal peptide; that stretch reads MSLFTSLPFLLLTAVTASCA. Residues 43–101 form the Collagen-like domain; sequence GINGIPGKDGRDGAKGEKGEPGQGLRGSQGPPGKMGPQGTPGIPGIPGPIGQKGDPGEN. Positions 43-103 are disordered; it reads GINGIPGKDG…QKGDPGENMG (61 aa). Proline 48 bears the 4-hydroxyproline mark. A compositionally biased stretch (basic and acidic residues) spans 50 to 62; the sequence is KDGRDGAKGEKGE. 4-hydroxyproline occurs at positions 63, 74, 83, and 86. Over residues 79–95 the composition is skewed to low complexity; that stretch reads PQGTPGIPGIPGPIGQK. Positions 113–131 form a coiled coil; sequence RATLQSELNQIKNWLIFSL. Residues 135–246 enclose the C-type lectin domain; it reads VGKKAFFTNG…CSASFLTVCE (112 aa). 2 disulfides stabilise this stretch: cysteine 156–cysteine 245 and cysteine 223–cysteine 237.

Oligomeric complex of 3 or more homotrimers. Interacts with MASP1 and MASP2. Interacts with MEP1A and MEP1B and may inhibit their catalytic activity. Post-translationally, hydroxylation on proline residues within the sequence motif, GXPG, is most likely to be 4-hydroxy as this fits the requirement for 4-hydroxylation in vertebrates.

Its subcellular location is the secreted. Its function is as follows. Calcium-dependent lectin involved in innate immune defense. Binds mannose, fucose and N-acetylglucosamine on different microorganisms and activates the lectin complement pathway. Binds to late apoptotic cells, as well as to apoptotic blebs and to necrotic cells, but not to early apoptotic cells, facilitating their uptake by macrophages. The protein is Mannose-binding protein C (MBL) of Bos taurus (Bovine).